A 377-amino-acid chain; its full sequence is Carboxynorspermidine/carboxyspermidine decarboxylase (377 aa).

Residue K41 is modified to N6-(pyridoxal phosphate)lysine. Substrate contacts are provided by E238 and D274.

It belongs to the Orn/Lys/Arg decarboxylase class-II family. NspC subfamily. Homodimer. It depends on pyridoxal 5'-phosphate as a cofactor.

The protein resides in the cytoplasm. It carries out the reaction carboxynorspermidine + H(+) = norspermidine + CO2. The enzyme catalyses carboxyspermidine + H(+) = spermidine + CO2. Dithiothreitol greatly stimulates activity, maximum stimulation being at 5-20 mM dithiothreitol concentration. Fe(3+), Fe(2+) and Mn(2+) severely inhibit activity (88%, 82% and 50%, respectively), whereas Zn(2+) has a slightly inhibitory effect (23%) and Mg(2+), Ca(2+), Cu(2+) and Cu(+) have no effect. Catalyzes the decarboxylation of carboxynorspermidine and carboxyspermidine. 2,3-diaminopropionic acid, 2,4-diaminobutyric acid, L-ornithine or L-lysine cannot serve as substrates. This is Carboxynorspermidine/carboxyspermidine decarboxylase from Vibrio alginolyticus.